Here is a 201-residue protein sequence, read N- to C-terminus: MAQQRALPQSKETLLQSYNKRLKDDVKSIMDNFTEIIKTAKIEDETQVSRATQGEQDNYEMHVRAANIVRAGESLMKLVSDLKQFLILNDFPSVNEAIDQRNQQLRALQEECDRKLIALRDEVSIDLYELEEEYYSSSSSLCEANDLPLCEAYWRLDPDTDSTDCLSAPLLASPEPSAGGPLQAAAPTHSHAGGPGPTEHA.

Residues 93–123 (SVNEAIDQRNQQLRALQEECDRKLIALRDEV) are a coiled coil. Residues 166 to 201 (LSAPLLASPEPSAGGPLQAAAPTHSHAGGPGPTEHA) are disordered.

In terms of assembly, component of the Mediator complex, which is composed of MED1, MED4, MED6, MED7, MED8, MED9, MED10, MED11, MED12, MED13, MED13L, MED14, MED15, MED16, MED17, MED18, MED19, MED20, MED21, MED22, MED23, MED24, MED25, MED26, MED27, MED29, MED30, MED31, CCNC, CDK8 and CDC2L6/CDK11. The MED12, MED13, CCNC and CDK8 subunits form a distinct module termed the CDK8 module. Mediator containing the CDK8 module is less active than Mediator lacking this module in supporting transcriptional activation. Individual preparations of the Mediator complex lacking one or more distinct subunits have been variously termed ARC, CRSP, DRIP, PC2, SMCC and TRAP.

Its subcellular location is the nucleus. Component of the Mediator complex, a coactivator involved in the regulated transcription of nearly all RNA polymerase II-dependent genes. Mediator functions as a bridge to convey information from gene-specific regulatory proteins to the basal RNA polymerase II transcription machinery. Mediator is recruited to promoters by direct interactions with regulatory proteins and serves as a scaffold for the assembly of a functional preinitiation complex with RNA polymerase II and the general transcription factors. This chain is Mediator of RNA polymerase II transcription subunit 22 (MED22), found in Bos taurus (Bovine).